The primary structure comprises 605 residues: MKKYLHILPACFLFYAAAHAQQKDTVYVTDFGAVPYSYENCVTQIQAAIDECKRTGAKVLSLPEGRYDIWPEGAIRKEYYISNTSTEQECPSKVKTVGLMLHEIDDLTIEGNGATLMYHGKMTTIALEHCNGVRINNLHIDFERPAGSEIQYRKVTGGETEVTLHRDTRYEIVNGKIRLYGEGWRSNRNHCIEYDPDTESFTYSQGWNTLSASDAREIAPGIVRFNTPAEFMPKAGNTLTVRDIIRDQVGLFILESKNITLSRLQMHYMHGLGIVSQYTENITMDRVKCAPRPDSGRLLAASADMMHFSGCKGKVIIDSCYFAGAQDDPVNVHGTNLRALEKIDAQTLKLRFMHGQSYGFNAYFKGDTVAFVRAATMERFASATVRDVRRISDRIVEVRFDRDIPTSLELNHDCVENMTCTPEVEIRNCYFTRTSTRGTLVTTPRKVVIENNTYYKTGMSAILIEADAEGWYESGPVKDVLIKGNTFIDCAYNGGPGHAVIAIHPSNKIIDAERPVHQNIRIEDNTFRTFDYPVLYAKSTAGLLFRNNTIVRTETFPAVSGNPYVFYLNGCKKAVIEGTVFEGETPRQSIKTENMKRKDLKTTIK.

The N-terminal stretch at Met-1–Ala-20 is a signal peptide. 6 PbH1 repeats span residues Ser-256–Tyr-278, Lys-312–Gly-334, Thr-421–Thr-443, Pro-444–Ala-466, Val-477–Asn-507, and His-517–Asn-547.

The protein belongs to the glycosyl hydrolase 110 family. A subfamily.

The enzyme catalyses Hydrolysis of terminal, non-reducing branched (1-&gt;3)-alpha-D-galactosidic residues, producing free D-galactose.. It catalyses the reaction Hydrolysis of terminal, non-reducing alpha-D-galactose residues in alpha-D-galactosides, including galactose oligosaccharides, galactomannans and galactolipids.. Alpha-galactosidase that specifically removes branched alpha-1,3-linked galactose residues present in blood group B antigens. Has no activity toward linear alpha-1,3-linked galactose residues. This Bacteroides fragilis (strain ATCC 25285 / DSM 2151 / CCUG 4856 / JCM 11019 / LMG 10263 / NCTC 9343 / Onslow / VPI 2553 / EN-2) protein is Alpha-1,3-galactosidase A (glaA).